The chain runs to 205 residues: Urease accessory protein UreG (205 aa).

Glycine 11–threonine 18 contacts GTP.

Belongs to the SIMIBI class G3E GTPase family. UreG subfamily. As to quaternary structure, homodimer. UreD, UreF and UreG form a complex that acts as a GTP-hydrolysis-dependent molecular chaperone, activating the urease apoprotein by helping to assemble the nickel containing metallocenter of UreC. The UreE protein probably delivers the nickel.

Its subcellular location is the cytoplasm. Functionally, facilitates the functional incorporation of the urease nickel metallocenter. This process requires GTP hydrolysis, probably effectuated by UreG. The sequence is that of Urease accessory protein UreG from Prochlorococcus marinus (strain NATL2A).